The primary structure comprises 254 residues: Activity-regulated cytoskeleton associated protein 1 (254 aa).

The protein belongs to the ARC/ARG3.1 family. As to quaternary structure, homooligomer; homooligomerizes into virion-like capsids. As to expression, expressed in a specific population of brain neurons, named E347, that are necessary and sufficient for proper body fat storage.

It localises to the extracellular vesicle membrane. It is found in the synapse. Its function is as follows. Master regulator of synaptic plasticity that self-assembles into virion-like capsids that encapsulate RNAs and mediate intercellular RNA transfer from motorneurons to muscles. Arc1 protein is released from motorneurons in extracellular vesicles that mediate the transfer of Arc1 mRNA into muscle cells, where Arc1 mRNA can undergo activity-dependent translation. Intercellular transfer od Arc1 mRNA is required for synaptic plasticity at the neuromuscular junction. May play a role in energy balance: required for regulation of body fat by a specific population of brain neurons, named E347, that are necessary and sufficient for proper body fat storage. In Drosophila melanogaster (Fruit fly), this protein is Activity-regulated cytoskeleton associated protein 1.